The sequence spans 513 residues: Activin receptor type-2A (513 aa).

A signal peptide spans 1 to 19 (MGAAAKLAFAVFLISCSSG). Over 20-135 (AILGRSETQE…TSNPVTPKPP (116 aa)) the chain is Extracellular. 5 disulfide bridges follow: C30-C60, C50-C78, C85-C104, C91-C103, and C105-C110. N-linked (GlcNAc...) asparagine glycosylation is found at N43 and N66. The chain crosses the membrane as a helical span at residues 136-161 (YYNILLYSLVPLMLVAGIVICAFWVY). The Cytoplasmic portion of the chain corresponds to 162-513 (RHHKMAYPPV…VDFPPKESSL (352 aa)). The region spanning 192–485 (LQLLEVKARG…GERITQMQRL (294 aa)) is the Protein kinase domain. Residues 198–206 (KARGGFGCV) and K219 contribute to the ATP site. The Proton acceptor role is filled by D322.

This sequence belongs to the protein kinase superfamily. TKL Ser/Thr protein kinase family. TGFB receptor subfamily. As to quaternary structure, part of a complex consisting of MAGI2/ARIP1, ACVR2A, ACVR1B and SMAD3. Interacts with MAGI2/ARIP1. Interacts with type I receptor ACVR1. Interacts with TSC22D1/TSC-22. Interacts with activin A/INHBA. It depends on Mg(2+) as a cofactor. Mn(2+) serves as cofactor.

The protein resides in the cell membrane. The catalysed reaction is L-threonyl-[receptor-protein] + ATP = O-phospho-L-threonyl-[receptor-protein] + ADP + H(+). It catalyses the reaction L-seryl-[receptor-protein] + ATP = O-phospho-L-seryl-[receptor-protein] + ADP + H(+). Functionally, on ligand binding, forms a receptor complex consisting of two type II and two type I transmembrane serine/threonine kinases. Type II receptors phosphorylate and activate type I receptors which autophosphorylate, then bind and activate SMAD transcriptional regulators. Receptor for activin A, activin B and inhibin A. Mediates induction of adipogenesis by GDF6. This Ovis aries (Sheep) protein is Activin receptor type-2A (ACVR2A).